The following is a 118-amino-acid chain: UPF0125 protein RSc1426 (118 aa).

Belongs to the UPF0125 (RnfH) family.

In Ralstonia nicotianae (strain ATCC BAA-1114 / GMI1000) (Ralstonia solanacearum), this protein is UPF0125 protein RSc1426.